A 236-amino-acid chain; its full sequence is RING-H2 finger protein ATL7 (236 aa).

Residues 31–51 form a helical membrane-spanning segment; that stretch reads AFIFSVPICFTFIVLFVLYVI. The RING-type; atypical zinc finger occupies 111-153; that stretch reads CSVCLGDYQAEEKLQQMPSCGHTFHMECIDLWLTSHTTCPLCR. The span at 176–196 shows a compositional bias: polar residues; it reads ENSNGGEASTQPDSQSATEAI. The tract at residues 176–236 is disordered; that stretch reads ENSNGGEAST…SDGCCTCRLG (61 aa). Basic and acidic residues predominate over residues 197 to 221; it reads SHTDDVEEGNRDSQEVSKETEENDR.

It belongs to the RING-type zinc finger family. ATL subfamily.

It localises to the membrane. The catalysed reaction is S-ubiquitinyl-[E2 ubiquitin-conjugating enzyme]-L-cysteine + [acceptor protein]-L-lysine = [E2 ubiquitin-conjugating enzyme]-L-cysteine + N(6)-ubiquitinyl-[acceptor protein]-L-lysine.. Its pathway is protein modification; protein ubiquitination. The polypeptide is RING-H2 finger protein ATL7 (ATL7) (Arabidopsis thaliana (Mouse-ear cress)).